The primary structure comprises 1232 residues: Anion exchange protein 3 (1232 aa).

A compositionally biased stretch (pro residues) spans 1–11; sequence MANGVIPPPGG. Disordered regions lie at residues 1-316 and 429-498; these read MANG…KLDR and NDDK…GDGH. Over 1 to 708 the chain is Cytoplasmic; sequence MANGVIPPPG…DLRDALHSQC (708 aa). Positions 58–75 are enriched in basic and acidic residues; the sequence is DPEKPSRSYSERDFEFHR. Basic residues-rich tracts occupy residues 76–97 and 104–113; these read HTSH…KLRR and RHTRRKRKKE. Acidic residues predominate over residues 134 to 152; the sequence is VEEEEEEEEEEEGESEAEP. A phosphoserine mark is found at serine 167, serine 170, serine 175, and serine 198. Low complexity predominate over residues 200-214; the sequence is QHSSSSPSPRAQASR. Basic and acidic residues predominate over residues 267-279; the sequence is DDMKSHRLEDNPG. Residues 280-289 show a composition bias toward basic residues; it reads VRRHLVKKPS. Residue arginine 295 is modified to Omega-N-methylarginine. Basic residues predominate over residues 305–316; it reads LRRKKKKKKLDR. The segment covering 440–450 has biased composition (polar residues); the sequence is NPSSSSMNSVL. A compositionally biased stretch (basic and acidic residues) spans 481-498; it reads HDPDAKEKPLHMPGGDGH. The next 5 membrane-spanning stretches (helical) occupy residues 709–731, 737–774, 794–816, 826–847, and 893–910; these read VAAV…GLLG, LMGV…LLVF, VWVG…SFLV, IFAF…YKVF, and ALLS…AFFL. Positions 709–1232 are membrane (anion exchange); it reads VAAVLFIYFA…DEYNELHMPV (524 aa). The Cytoplasmic segment spans residues 911 to 925; that stretch reads RKFRNSRFLGGKARR. 5 helical membrane-spanning segments follow: residues 926–946, 980–1002, 1028–1049, 1083–1128, and 1155–1191; these read IIGD…DYSI, PFPP…LIFM, LLLI…LTAA, VTGV…IQLS, and MHLF…TVPL. Cysteine 1165 carries the S-palmitoyl cysteine lipid modification.

Belongs to the anion exchanger (TC 2.A.31) family.

The protein resides in the cell membrane. The enzyme catalyses hydrogencarbonate(in) + chloride(out) = hydrogencarbonate(out) + chloride(in). Functionally, sodium-independent anion exchanger which mediates the electroneutral exchange of chloride for bicarbonate ions across the cell membrane. May be involved in the regulation of intracellular pH, and the modulation of cardiac action potential. The chain is Anion exchange protein 3 (SLC4A3) from Pongo abelii (Sumatran orangutan).